Reading from the N-terminus, the 888-residue chain is Serine/arginine repetitive matrix protein 1 (888 aa).

Residues 27–126 form the PWI domain; sequence QLKFAECLEK…AGIPTAFLEL (100 aa). Residues 139–169 are compositionally biased toward basic and acidic residues; it reads EKLASMKKQDEDKEKRDKEDKDNREKRDRSR. The interval 139–888 is disordered; that stretch reads EKLASMKKQD…MRKAQVSPPS (750 aa). Residues 170 to 206 are compositionally biased toward basic residues; the sequence is SPRRRKSRSPSPRRRSSPIRRERKRSHSRSPHHRTKS. Basic and acidic residues-rich tracts occupy residues 213–232 and 254–276; these read PEKKEATPEPEPSVKPKETV and ETKEISPERNSKKEREKEKEKTR. Composition is skewed to basic residues over residues 277-325 and 332-347; these read QRSP…RTPP and PRHRRSRSPVRRRRRS. 2 stretches are compositionally biased toward low complexity: residues 348–364 and 473–496; these read SASLSGSSSSSSSSRSR and SVQQRRQYRRQNQQSSSDSGSSSS. 2 stretches are compositionally biased toward basic residues: residues 528–554 and 561–585; these read PRKRQKEPSPRRRRRSPSPPPARRRRS and PRRRRSPSLPRRRSPSPPPRRRSPS. The segment covering 586–598 has biased composition (low complexity); it reads PRRYSPPIQRRYS. 2 stretches are compositionally biased toward basic residues: residues 614-629 and 642-656; these read PKRRASPSPQSKRRVS and AKRRSPSISSKHRKG. The span at 662–677 shows a compositional bias: basic and acidic residues; the sequence is SNRETRSPPQNKRDSP. 3 stretches are compositionally biased toward low complexity: residues 697 to 712, 728 to 749, and 763 to 775; these read ASASPQRRQSPSPSTR, ASTPSPRSARRVSSSRSASGSP, and ARSRSPSANWSPA. Positions 780 to 790 are enriched in polar residues; sequence SPTQSPSPARN. Residues 798-823 are compositionally biased toward basic residues; sequence KKKKKKKDKKHKKDKKHKKHKKHKKE. The span at 826–843 shows a compositional bias: low complexity; that stretch reads AVAAAPAAVAAADTTSAQ. The span at 866 to 876 shows a compositional bias: basic and acidic residues; it reads DLEKHLREKAL.

The protein belongs to the splicing factor SR family.

It localises to the nucleus. Involved in pre-mRNA splicing and processing events. This chain is Serine/arginine repetitive matrix protein 1 (SRRM1), found in Gallus gallus (Chicken).